Reading from the N-terminus, the 411-residue chain is 1-deoxy-D-xylulose 5-phosphate reductoisomerase (411 aa).

Residues threonine 23, glycine 24, serine 25, isoleucine 26, glycine 49, arginine 50, asparagine 51, and asparagine 137 each coordinate NADPH. Lysine 138 contributes to the 1-deoxy-D-xylulose 5-phosphate binding site. Glutamate 139 is a binding site for NADPH. Aspartate 163 provides a ligand contact to Mn(2+). Residues serine 164, glutamate 165, serine 199, and histidine 222 each contribute to the 1-deoxy-D-xylulose 5-phosphate site. Glutamate 165 contributes to the Mn(2+) binding site. Glycine 228 lines the NADPH pocket. 1-deoxy-D-xylulose 5-phosphate is bound by residues serine 235, asparagine 240, lysine 241, and glutamate 244. Residue glutamate 244 participates in Mn(2+) binding.

This sequence belongs to the DXR family. The cofactor is Mg(2+). Requires Mn(2+) as cofactor.

The enzyme catalyses 2-C-methyl-D-erythritol 4-phosphate + NADP(+) = 1-deoxy-D-xylulose 5-phosphate + NADPH + H(+). It participates in isoprenoid biosynthesis; isopentenyl diphosphate biosynthesis via DXP pathway; isopentenyl diphosphate from 1-deoxy-D-xylulose 5-phosphate: step 1/6. Functionally, catalyzes the NADPH-dependent rearrangement and reduction of 1-deoxy-D-xylulose-5-phosphate (DXP) to 2-C-methyl-D-erythritol 4-phosphate (MEP). The protein is 1-deoxy-D-xylulose 5-phosphate reductoisomerase of Mannheimia succiniciproducens (strain KCTC 0769BP / MBEL55E).